The following is a 1180-amino-acid chain: Polyamine-transporting ATPase 13A2 (1180 aa).

At 1-44 (MSADSSPLVGSTPTGYGTLTIGTSIDPLSSSVSSVRLSGYCGSP) the chain is on the cytoplasmic side. An intramembrane segment occupies 45–65 (WRVIGYHVVVWMMAGIPLLLF). The Cytoplasmic portion of the chain corresponds to 66 to 235 (RWKPLWGVRL…KSYPQLLVDE (170 aa)). Serine 151 bears the Phosphoserine mark. The helical transmembrane segment at 236 to 253 (ALNPYYGFQAFSIALWLA) threads the bilayer. Topologically, residues 254-256 (DHY) are lumenal. A helical membrane pass occupies residues 257 to 276 (YWYALCIFLISSISICLSLY). Residues 277–427 (KTRKQSQTLR…NFKFYKHSMK (151 aa)) are Cytoplasmic-facing. A helical transmembrane segment spans residues 428-448 (FVAALSVLALLGTIYSIFILY). Residues 449 to 463 (RNRVPLNEIVIRALD) lie on the Lumenal side of the membrane. Residues 464–484 (LVTVVVPPALPAAMTVCTLYA) form a helical membrane-spanning segment. Residues 485 to 930 (QSRLRRQGIF…REGRCSLDTS (446 aa)) are Cytoplasmic-facing. Aspartate 513 functions as the 4-aspartylphosphate intermediate in the catalytic mechanism. The Mg(2+) site is built by aspartate 878 and aspartate 882. A helical membrane pass occupies residues 931 to 951 (FSVFKYMALYSLTQFISVLIL). Residues 952–957 (YTINTN) are Lumenal-facing. A helical transmembrane segment spans residues 958–978 (LGDLQFLAIDLVITTTVAVLM). Residues 979 to 994 (SRTGPALVLGRVRPPG) lie on the Cytoplasmic side of the membrane. The helical transmembrane segment at 995–1015 (ALLSVPVLSSLLLQMVLVTGV) threads the bilayer. The Lumenal segment spans residues 1016–1048 (QLGGYFLTLAQPWFVPLNRTVAAPDNLPNYENT). The N-linked (GlcNAc...) asparagine glycan is linked to asparagine 1033. A helical transmembrane segment spans residues 1049–1069 (VVFSLSSFQYLILAAAVSKGA). Topologically, residues 1070–1080 (PFRRPLYTNVP) are cytoplasmic. A helical transmembrane segment spans residues 1081 to 1101 (FLVALALLSSVLVGLVLVPGL). Topologically, residues 1102–1117 (LQGPLALRNITDTGFK) are lumenal. Asparagine 1110 carries an N-linked (GlcNAc...) asparagine glycan. The helical transmembrane segment at 1118-1138 (LLLLGLVTLNFVGAFMLESVL) threads the bilayer. The Cytoplasmic segment spans residues 1139 to 1180 (DQCLPACLRRLRPKRASKKRFKQLERELAEQPWPPLPAGPLR).

It belongs to the cation transport ATPase (P-type) (TC 3.A.3) family. Type V subfamily. In terms of assembly, interacts with MYCBP2; the interaction inhibits the ubiquitination of TSC2 by MYCBP2. Interacts with HDAC6; the interaction results in recruitment of HDAC6 to lysosomes to promote CTTN deacetylation. In terms of processing, autophosphorylated. Accumulates in an inactive autophosphorylated state and autophosphorylation is stimulated by phosphatidic acid and phosphatidylinositol 3,5-bisphosphate but not by Mn(2+) or Zn(2+). The presence of spermine results in a dose-dependent reduction in autophosphorylation. As to expression, expressed in brain; protein levels are markedly increased in brain from subjects with Parkinson disease and subjects with dementia with Lewy bodies. Detected in pyramidal neurons located throughout the cingulate cortex (at protein level). In the substantia nigra, it is found in neuromelanin-positive dopaminergic neurons (at protein level).

The protein resides in the lysosome membrane. Its subcellular location is the late endosome membrane. It localises to the endosome. The protein localises to the multivesicular body membrane. It is found in the cytoplasmic vesicle. The protein resides in the autophagosome membrane. It catalyses the reaction spermidine(out) + ATP + H2O = spermidine(in) + ADP + phosphate + H(+). It carries out the reaction spermine(out) + ATP + H2O = spermine(in) + ADP + phosphate + H(+). With respect to regulation, accumulates in an inactive autophosphorylated state. The presence of spermine results in a dose-dependent reduction in autophosphorylation. Functionally, ATPase which acts as a lysosomal polyamine exporter with high affinity for spermine. Also stimulates cellular uptake of polyamines and protects against polyamine toxicity. Plays a role in intracellular cation homeostasis and the maintenance of neuronal integrity. Contributes to cellular zinc homeostasis. Confers cellular protection against Mn(2+) and Zn(2+) toxicity and mitochondrial stress. Required for proper lysosomal and mitochondrial maintenance. Regulates the autophagy-lysosome pathway through the control of SYT11 expression at both transcriptional and post-translational levels. Facilitates recruitment of deacetylase HDAC6 to lysosomes to deacetylate CTTN, leading to actin polymerization, promotion of autophagosome-lysosome fusion and completion of autophagy. Promotes secretion of exosomes as well as secretion of SCNA via exosomes. Plays a role in lipid homeostasis. The polypeptide is Polyamine-transporting ATPase 13A2 (Homo sapiens (Human)).